Here is a 328-residue protein sequence, read N- to C-terminus: MAKDIRVLLYYLYTPIENAEQFAADHLAFCKSIGLKGRILVADEGINGTVSGDYETTQKYMDYVHSLPGMEDLWFKIDEENEQAFKKMFVRYKKEIVHLGLEDNDFDNDINPLETTGAYLSPKEFKEALLDKDTVVLDTRNDYEYDLGHFRGAIRPDIRNFRELPQWVRDNKEKFMDKRVVVYCTGGVRCEKFSGWMVREGYKDVGQLHGGIATYGKDPEVQGELWDGKMYVFDERIAVDVNHVNPTIVGKDWFDGTPCERYVNCGNPFCNRRILTSEENEDKYLRGCSHECRVHPRNRYVSKNELTQAEVIERLAAIGESLDQAATV.

The region spanning 130–224 (LDKDTVVLDT…YGKDPEVQGE (95 aa)) is the Rhodanese domain. The active-site Cysteine persulfide intermediate is the Cys-184.

Belongs to the TrhO family.

The enzyme catalyses uridine(34) in tRNA + AH2 + O2 = 5-hydroxyuridine(34) in tRNA + A + H2O. Catalyzes oxygen-dependent 5-hydroxyuridine (ho5U) modification at position 34 in tRNAs. This chain is tRNA uridine(34) hydroxylase, found in Streptococcus pneumoniae (strain Hungary19A-6).